Consider the following 253-residue polypeptide: tRNA pseudouridine synthase A (253 aa).

Asp53 functions as the Nucleophile in the catalytic mechanism. Residue Tyr112 participates in substrate binding.

This sequence belongs to the tRNA pseudouridine synthase TruA family. In terms of assembly, homodimer.

It carries out the reaction uridine(38/39/40) in tRNA = pseudouridine(38/39/40) in tRNA. Its function is as follows. Formation of pseudouridine at positions 38, 39 and 40 in the anticodon stem and loop of transfer RNAs. In Lactococcus lactis subsp. lactis (strain IL1403) (Streptococcus lactis), this protein is tRNA pseudouridine synthase A.